We begin with the raw amino-acid sequence, 85 residues long: U4-theraphotoxin-Hhn1d (85 aa).

The first 22 residues, Met1 to Ala22, serve as a signal peptide directing secretion. The propeptide occupies Glu23 to Arg48. 3 cysteine pairs are disulfide-bonded: Cys52–Cys66, Cys56–Cys77, and Cys71–Cys82.

Belongs to the neurotoxin 12 (Hwtx-2) family. 02 (Hwtx-2) subfamily. In terms of tissue distribution, expressed by the venom gland.

The protein resides in the secreted. Functionally, postsynaptic neurotoxin. This Cyriopagopus hainanus (Chinese bird spider) protein is U4-theraphotoxin-Hhn1d.